A 314-amino-acid chain; its full sequence is Dihydropteroate synthase (314 aa).

The region spanning 10–294 is the Pterin-binding domain; that stretch reads TVICGIINVT…DVASHRMAVE (285 aa). Mg(2+) is bound at residue N17. (7,8-dihydropterin-6-yl)methyl diphosphate contacts are provided by residues D91, N110, D201, K237, and 282 to 284; that span reads RVH.

Belongs to the DHPS family. In terms of assembly, homodimer. Requires Mg(2+) as cofactor.

The catalysed reaction is (7,8-dihydropterin-6-yl)methyl diphosphate + 4-aminobenzoate = 7,8-dihydropteroate + diphosphate. It participates in cofactor biosynthesis; tetrahydrofolate biosynthesis; 7,8-dihydrofolate from 2-amino-4-hydroxy-6-hydroxymethyl-7,8-dihydropteridine diphosphate and 4-aminobenzoate: step 1/2. Is potently inhibited by sulfonamides, with Ki values between 25 nM and 850 nM. In terms of biological role, catalyzes the condensation of para-aminobenzoate (pABA) with 6-hydroxymethyl-7,8-dihydropterin diphosphate (DHPt-PP) to form 7,8-dihydropteroate, the immediate precursor of folate derivatives. Functionally, is the target for the sulfonamide group of antimicrobial drugs. Sulfonamide drugs act as pABA analogs, they inhibit the reaction by acting as alternative substrates, leading to a 'dead end' sulfa-pterin product. The sequence is that of Dihydropteroate synthase (sulA) from Streptococcus pneumoniae (strain ATCC BAA-255 / R6).